The sequence spans 710 residues: Early transcription factor 82 kDa subunit (710 aa).

Belongs to the poxviridae VETF large subunit family. In terms of assembly, heterodimer of a 70 kDa and a 82 kDa subunit. Part of the early transcription complex composed of ETF, RAP94/OPG109, and the DNA-directed RNA polymerase.

It localises to the virion. In terms of biological role, acts with RNA polymerase to initiate transcription from early gene promoters. Is recruited by the RPO-associated protein of 94 kDa RAP94/OPG109 to form the early transcription complex, which also contains the core RNA polymerase. ETF heterodimer binds to early gene promoters. This is Early transcription factor 82 kDa subunit (OPG133) from Bos taurus (Bovine).